Reading from the N-terminus, the 74-residue chain is Mucroporin (74 aa).

An N-terminal signal peptide occupies residues 1 to 22 (MKVKFLLAVFLIVLVVTDHCHA). Position 39 is a lysine amide (Lys-39). Residues 45-74 (QMEARFEPQNRNYRKRELDLEKLFANMPDY) constitute a propeptide that is removed on maturation.

This sequence belongs to the non-disulfide-bridged peptide (NDBP) superfamily. Short antimicrobial peptide (group 4) family. In terms of tissue distribution, expressed by the venom gland.

The protein localises to the secreted. It is found in the target cell membrane. Its function is as follows. Mucroporin: cationic host defense peptide that have antibacterial activity by breaking membranes. Is more effective on Gram-positive than on Gram-negative bacteria. Minimum inhibitory concentrations (MIC) are the following: MIC=&gt;100 ug/ml against E.coli AB94012, MIC=&gt;100 ug/ml against P.aeruginosa AB93066, MIC=25 ug/ml against B.thuringiensis AB92037, MIC=50 ug/ml against B.subtilis AB91021, MIC=25 ug/ml against S.aureus AB94004, and MIC=25 ug/ml against the methicillin-resistant coagulase-negative Staphylococcus. Its synthetic analog mucroporin-M1 is more effective. Does not show antiviral activity against any of measles, SARS-CoV, influenza H5N1, hepatitis B and HIV-1 viruses. Functionally, mutant mucroporin-M1: can inhibit Gram-positive bacteria at low concentrations and antibiotic-resistant pathogens. Minimum inhibitory concentrations (MIC) are the following: MIC=12.5 ug/ml against E.coli AB94012, MIC=100 ug/ml against P.aeruginosa AB93066, MIC=25 ug/ml against B.thuringiensis AB92037, MIC=25 ug/ml against B.subtilis AB91021, MIC=5 ug/ml against S.aureus AB94004, and MIC=5 ug/ml against the methicillin-resistant coagulase-negative Staphylococcus. Also shows antiviral activities against measles (EC(50) of 7.15 ug/ml), SARS-CoV (EC(50) of 14.46 ug/ml), influenza H5N1 viruses (EC(50) of 2.10 mug/ml), HIV-1, and hepatitis B virus. The protein is Mucroporin of Lychas mucronatus (Chinese swimming scorpion).